The sequence spans 217 residues: Frizzled-8 (217 aa).

The Extracellular segment spans residues 1–26; sequence AGAAELQPELAVAEHVRYESTGPALC. A helical transmembrane segment spans residues 27–47; sequence TVVFLLVYFFGMASSIWWVIL. Topologically, residues 48–69 are cytoplasmic; it reads SLTWFLAAGMKWGNEAIAGYAQ. A helical membrane pass occupies residues 70–90; sequence YFHLAAWLLPSVKSIAVLALS. The Extracellular portion of the chain corresponds to 91–113; the sequence is SVDGDPVAGICYVGNQSLENLRG. Asn105 carries an N-linked (GlcNAc...) asparagine glycan. A helical transmembrane segment spans residues 114–134; sequence FVLAPLVVYLFTGSLFLLAGF. Residues 135-160 lie on the Cytoplasmic side of the membrane; it reads VSLFRIRSVIKQGGTKTDKLEKLMIR. The chain crosses the membrane as a helical span at residues 161–181; the sequence is IGIFTVLYTVPATIVIACYIY. Over 182 to 209 the chain is Extracellular; the sequence is EQHNREAWEQAQNCSCPGDPHRPKPDYA. Asn194 carries an N-linked (GlcNAc...) asparagine glycan. Residues 210 to 217 traverse the membrane as a helical segment; it reads VFMLKYFM.

Belongs to the G-protein coupled receptor Fz/Smo family.

It is found in the membrane. It localises to the cell membrane. Its function is as follows. Receptor for Wnt proteins. Most of frizzled receptors are coupled to the beta-catenin canonical signaling pathway, which leads to the activation of disheveled proteins, inhibition of GSK-3 kinase, nuclear accumulation of beta-catenin and activation of Wnt target genes. A second signaling pathway involving PKC and calcium fluxes has been seen for some family members, but it is not yet clear if it represents a distinct pathway or if it can be integrated in the canonical pathway, as PKC seems to be required for Wnt-mediated inactivation of GSK-3 kinase. Both pathways seem to involve interactions with G-proteins. May be involved in transduction and intercellular transmission of polarity information during tissue morphogenesis and/or in differentiated tissues. The sequence is that of Frizzled-8 (FZD8) from Gallus gallus (Chicken).